The sequence spans 380 residues: Glucose-1-phosphate adenylyltransferase (380 aa).

Alpha-D-glucose 1-phosphate-binding positions include Gly164, 179–180 (EK), and Ser190.

It belongs to the bacterial/plant glucose-1-phosphate adenylyltransferase family. In terms of assembly, homotetramer.

The enzyme catalyses alpha-D-glucose 1-phosphate + ATP + H(+) = ADP-alpha-D-glucose + diphosphate. It participates in glycan biosynthesis; glycogen biosynthesis. In terms of biological role, involved in the biosynthesis of ADP-glucose, a building block required for the elongation reactions to produce glycogen. Catalyzes the reaction between ATP and alpha-D-glucose 1-phosphate (G1P) to produce pyrophosphate and ADP-Glc. The polypeptide is Glucose-1-phosphate adenylyltransferase (Lactococcus lactis subsp. cremoris (strain SK11)).